Consider the following 292-residue polypeptide: 4-hydroxy-tetrahydrodipicolinate synthase (292 aa).

Position 50 (threonine 50) interacts with pyruvate. Tyrosine 139 functions as the Proton donor/acceptor in the catalytic mechanism. The Schiff-base intermediate with substrate role is filled by lysine 167. Residue isoleucine 208 participates in pyruvate binding.

Belongs to the DapA family. As to quaternary structure, homotetramer; dimer of dimers.

The protein resides in the cytoplasm. The catalysed reaction is L-aspartate 4-semialdehyde + pyruvate = (2S,4S)-4-hydroxy-2,3,4,5-tetrahydrodipicolinate + H2O + H(+). It participates in amino-acid biosynthesis; L-lysine biosynthesis via DAP pathway; (S)-tetrahydrodipicolinate from L-aspartate: step 3/4. In terms of biological role, catalyzes the condensation of (S)-aspartate-beta-semialdehyde [(S)-ASA] and pyruvate to 4-hydroxy-tetrahydrodipicolinate (HTPA). This is 4-hydroxy-tetrahydrodipicolinate synthase from Oenococcus oeni (strain ATCC BAA-331 / PSU-1).